Here is a 316-residue protein sequence, read N- to C-terminus: tRNA dimethylallyltransferase (316 aa).

Position 17-24 (17-24 (GPTASGKT)) interacts with ATP. 19–24 (TASGKT) contacts substrate. Interaction with substrate tRNA stretches follow at residues 42 to 45 (DSAL), 166 to 170 (QRLSR), 247 to 252 (RCVGYR), and 280 to 287 (KRQITWLR).

Belongs to the IPP transferase family. Monomer. Mg(2+) serves as cofactor.

It carries out the reaction adenosine(37) in tRNA + dimethylallyl diphosphate = N(6)-dimethylallyladenosine(37) in tRNA + diphosphate. Catalyzes the transfer of a dimethylallyl group onto the adenine at position 37 in tRNAs that read codons beginning with uridine, leading to the formation of N6-(dimethylallyl)adenosine (i(6)A). This chain is tRNA dimethylallyltransferase, found in Shigella flexneri serotype 5b (strain 8401).